A 351-amino-acid polypeptide reads, in one-letter code: N-acetyl-gamma-glutamyl-phosphate reductase (351 aa).

Cys-154 is a catalytic residue.

The protein belongs to the NAGSA dehydrogenase family. Type 1 subfamily.

The protein localises to the cytoplasm. It carries out the reaction N-acetyl-L-glutamate 5-semialdehyde + phosphate + NADP(+) = N-acetyl-L-glutamyl 5-phosphate + NADPH + H(+). Its pathway is amino-acid biosynthesis; L-arginine biosynthesis; N(2)-acetyl-L-ornithine from L-glutamate: step 3/4. Catalyzes the NADPH-dependent reduction of N-acetyl-5-glutamyl phosphate to yield N-acetyl-L-glutamate 5-semialdehyde. This chain is N-acetyl-gamma-glutamyl-phosphate reductase, found in Prochlorococcus marinus (strain MIT 9301).